An 865-amino-acid polypeptide reads, in one-letter code: Alanine--tRNA ligase (865 aa).

Zn(2+)-binding residues include H554, H558, C656, and H660.

The protein belongs to the class-II aminoacyl-tRNA synthetase family. Zn(2+) is required as a cofactor.

The protein resides in the cytoplasm. It carries out the reaction tRNA(Ala) + L-alanine + ATP = L-alanyl-tRNA(Ala) + AMP + diphosphate. Catalyzes the attachment of alanine to tRNA(Ala) in a two-step reaction: alanine is first activated by ATP to form Ala-AMP and then transferred to the acceptor end of tRNA(Ala). Also edits incorrectly charged Ser-tRNA(Ala) and Gly-tRNA(Ala) via its editing domain. The protein is Alanine--tRNA ligase of Francisella tularensis subsp. novicida (strain U112).